The sequence spans 529 residues: Bifunctional purine biosynthesis protein PurH (529 aa).

An MGS-like domain is found at 2 to 148; that stretch reads QQLRPIHRAL…KNHKDVAIVV (147 aa).

The protein belongs to the PurH family.

The enzyme catalyses (6R)-10-formyltetrahydrofolate + 5-amino-1-(5-phospho-beta-D-ribosyl)imidazole-4-carboxamide = 5-formamido-1-(5-phospho-D-ribosyl)imidazole-4-carboxamide + (6S)-5,6,7,8-tetrahydrofolate. It carries out the reaction IMP + H2O = 5-formamido-1-(5-phospho-D-ribosyl)imidazole-4-carboxamide. It participates in purine metabolism; IMP biosynthesis via de novo pathway; 5-formamido-1-(5-phospho-D-ribosyl)imidazole-4-carboxamide from 5-amino-1-(5-phospho-D-ribosyl)imidazole-4-carboxamide (10-formyl THF route): step 1/1. Its pathway is purine metabolism; IMP biosynthesis via de novo pathway; IMP from 5-formamido-1-(5-phospho-D-ribosyl)imidazole-4-carboxamide: step 1/1. This chain is Bifunctional purine biosynthesis protein PurH, found in Photorhabdus laumondii subsp. laumondii (strain DSM 15139 / CIP 105565 / TT01) (Photorhabdus luminescens subsp. laumondii).